The sequence spans 149 residues: Ribosomal RNA large subunit methyltransferase H (149 aa).

S-adenosyl-L-methionine-binding positions include Leu-71, Gly-98, and 117–122 (LSKLTL).

The protein belongs to the RNA methyltransferase RlmH family. As to quaternary structure, homodimer.

It localises to the cytoplasm. It catalyses the reaction pseudouridine(1915) in 23S rRNA + S-adenosyl-L-methionine = N(3)-methylpseudouridine(1915) in 23S rRNA + S-adenosyl-L-homocysteine + H(+). Specifically methylates the pseudouridine at position 1915 (m3Psi1915) in 23S rRNA. The chain is Ribosomal RNA large subunit methyltransferase H from Campylobacter jejuni subsp. jejuni serotype O:6 (strain 81116 / NCTC 11828).